We begin with the raw amino-acid sequence, 764 residues long: Phenylalanine--tRNA ligase beta subunit (764 aa).

A tRNA-binding domain is found at 38-148 (CIAPKNVVVG…GELVLGKELH (111 aa)). Positions 375 to 455 (LKDCALTFQL…RFVGIDNLVS (81 aa)) constitute a B5 domain. Mg(2+)-binding residues include Asp-433, Asp-439, Glu-442, and Glu-443. The FDX-ACB domain occupies 673-763 (SIYPSSVRDL…LEKEFNARLK (91 aa)).

This sequence belongs to the phenylalanyl-tRNA synthetase beta subunit family. Type 1 subfamily. Tetramer of two alpha and two beta subunits. Mg(2+) is required as a cofactor.

It localises to the cytoplasm. It catalyses the reaction tRNA(Phe) + L-phenylalanine + ATP = L-phenylalanyl-tRNA(Phe) + AMP + diphosphate + H(+). This chain is Phenylalanine--tRNA ligase beta subunit (pheT), found in Helicobacter pylori (strain J99 / ATCC 700824) (Campylobacter pylori J99).